Consider the following 292-residue polypeptide: Cyclin-dependent kinase 5 (292 aa).

Positions 4–286 (YEKLEKIGEG…AEEALQHPYF (283 aa)) constitute a Protein kinase domain. ATP-binding positions include 10 to 18 (IGEGTYGTV) and K33. Y15 carries the post-translational modification Phosphotyrosine; by ABL1, EPHA4 and FYN. Phosphothreonine is present on T17. K56 carries the N6-acetyllysine modification. S72 is subject to Phosphoserine. The active-site Proton acceptor is D126. S159 bears the Phosphoserine mark.

This sequence belongs to the protein kinase superfamily. CMGC Ser/Thr protein kinase family. CDC2/CDKX subfamily. In terms of assembly, heterodimer composed of a catalytic subunit CDK5 and a regulatory subunit CDK5R1 (p25) and macromolecular complex composed of at least CDK5, CDK5R1 (p35) and CDK5RAP1 or CDK5RAP2 or CDK5RAP3. Only the heterodimer shows kinase activity. Under neurotoxic stress and neuronal injury conditions, p35 is cleaved by calpain to generate p25 that hyperactivates CDK5, that becomes functionally disabled and often toxic. Found in a trimolecular complex with CABLES1 and ABL1. Interacts with CABLES1 and CABLES2. Interacts with AATK and GSTP1. Binds to HDAC1 when in complex with p25. Interaction with myristoylation p35 promotes CDK5 association with membranes. Both isoforms 1 and 2 interacts with beta-catenin/CTNNB1. Interacts with delta-catenin/CTNND2 and APEX1. Interacts with P53/TP53 in neurons. Interacts with EPHA4; may mediate the activation of NGEF by EPHA4. Interacts with PTK2/FAK1. The complex p35/CDK5 interacts with CLOCK. Interacts with HTR6. Post-translationally, phosphorylation on Tyr-15 by ABL1 and FYN, and on Ser-159 by casein kinase 1 promotes kinase activity. By contrast, phosphorylation at Thr-14 inhibits activity. In terms of processing, phosphorylation at Ser-159 is essential for maximal catalytic activity. Ubiquitously expressed. Accumulates in cortical neurons (at protein level). In terms of tissue distribution, expressed in the testis, skeletal muscle, colon, bone marrow and ovary.

The protein resides in the cytoplasm. Its subcellular location is the nucleus. It localises to the cell membrane. The protein localises to the perikaryon. It is found in the cell projection. The protein resides in the lamellipodium. Its subcellular location is the growth cone. It localises to the postsynaptic density. The protein localises to the synapse. The catalysed reaction is L-seryl-[protein] + ATP = O-phospho-L-seryl-[protein] + ADP + H(+). It catalyses the reaction L-threonyl-[protein] + ATP = O-phospho-L-threonyl-[protein] + ADP + H(+). With respect to regulation, inhibited by 2-(1-ethyl-2-hydroxyethylamino)-6-benzylamino-9-isopropylpurine (roscovitine), 1-isopropyl-4-aminobenzyl-6-ether-linked benzimidazoles, resveratrol, AT-7519 and olomoucine. Activated by CDK5R1 (p35) and CDK5R2 (p39) during the development of the nervous system; degradation of CDK5R1 (p35) and CDK5R2 (p39) by proteasome result in down regulation of kinase activity, during this process, CDK5 phosphorylates p35 and induces its ubiquitination and subsequent degradation. Kinase activity is mainly determined by the amount of p35 available and subcellular location; reversible association to plasma membrane inhibits activity. Long-term inactivation as well as CDK5R1 (p25)-mediated hyperactivation of CDK5 triggers cell death. The pro-death activity of hyperactivated CDK5 is suppressed by membrane association of CDK5, via myristoylation of p35. Brain-derived neurotrophic factor, glial-derived neurotrophic factor, nerve growth factor (NGF), retinoic acid, laminin and neuregulin promote activity. Neurotoxicity enhances nuclear activity, thus leading to MEF2 phosphorylation and inhibition prior to apoptosis of cortical neurons. Repression by GSTP1 via p25/p35 translocation prevents neurodegeneration. In terms of biological role, proline-directed serine/threonine-protein kinase essential for neuronal cell cycle arrest and differentiation and may be involved in apoptotic cell death in neuronal diseases by triggering abortive cell cycle re-entry. Interacts with D1 and D3-type G1 cyclins. Phosphorylates SRC, NOS3, VIM/vimentin, p35/CDK5R1, MEF2A, SIPA1L1, SH3GLB1, PXN, PAK1, MCAM/MUC18, SEPT5, SYN1, DNM1, AMPH, SYNJ1, CDK16, RAC1, RHOA, CDC42, TONEBP/NFAT5, MAPT/TAU, MAP1B, histone H1, p53/TP53, HDAC1, APEX1, PTK2/FAK1, huntingtin/HTT, ATM, MAP2, NEFH and NEFM. Regulates several neuronal development and physiological processes including neuronal survival, migration and differentiation, axonal and neurite growth, synaptogenesis, oligodendrocyte differentiation, synaptic plasticity and neurotransmission, by phosphorylating key proteins. Negatively regulates the CACNA1B/CAV2.2 -mediated Ca(2+) release probability at hippocampal neuronal soma and synaptic terminals. Activated by interaction with CDK5R1 (p35) and CDK5R2 (p39), especially in postmitotic neurons, and promotes CDK5R1 (p35) expression in an autostimulation loop. Phosphorylates many downstream substrates such as Rho and Ras family small GTPases (e.g. PAK1, RAC1, RHOA, CDC42) or microtubule-binding proteins (e.g. MAPT/TAU, MAP2, MAP1B), and modulates actin dynamics to regulate neurite growth and/or spine morphogenesis. Also phosphorylates exocytosis associated proteins such as MCAM/MUC18, SEPT5, SYN1, and CDK16/PCTAIRE1 as well as endocytosis associated proteins such as DNM1, AMPH and SYNJ1 at synaptic terminals. In the mature central nervous system (CNS), regulates neurotransmitter movements by phosphorylating substrates associated with neurotransmitter release and synapse plasticity; synaptic vesicle exocytosis, vesicles fusion with the presynaptic membrane, and endocytosis. Promotes cell survival by activating anti-apoptotic proteins BCL2 and STAT3, and negatively regulating of JNK3/MAPK10 activity. Phosphorylation of p53/TP53 in response to genotoxic and oxidative stresses enhances its stabilization by preventing ubiquitin ligase-mediated proteasomal degradation, and induces transactivation of p53/TP53 target genes, thus regulating apoptosis. Phosphorylation of p35/CDK5R1 enhances its stabilization by preventing calpain-mediated proteolysis producing p25/CDK5R1 and avoiding ubiquitin ligase-mediated proteasomal degradation. During aberrant cell-cycle activity and DNA damage, p25/CDK5 activity elicits cell-cycle activity and double-strand DNA breaks that precedes neuronal death by deregulating HDAC1. DNA damage triggered phosphorylation of huntingtin/HTT in nuclei of neurons protects neurons against polyglutamine expansion as well as DNA damage mediated toxicity. Phosphorylation of PXN reduces its interaction with PTK2/FAK1 in matrix-cell focal adhesions (MCFA) during oligodendrocytes (OLs) differentiation. Negative regulator of Wnt/beta-catenin signaling pathway. Activator of the GAIT (IFN-gamma-activated inhibitor of translation) pathway, which suppresses expression of a post-transcriptional regulon of proinflammatory genes in myeloid cells; phosphorylates the linker domain of glutamyl-prolyl tRNA synthetase (EPRS) in a IFN-gamma-dependent manner, the initial event in assembly of the GAIT complex. Phosphorylation of SH3GLB1 is required for autophagy induction in starved neurons. Phosphorylation of TONEBP/NFAT5 in response to osmotic stress mediates its rapid nuclear localization. MEF2 is inactivated by phosphorylation in nucleus in response to neurotoxin, thus leading to neuronal apoptosis. APEX1 AP-endodeoxyribonuclease is repressed by phosphorylation, resulting in accumulation of DNA damage and contributing to neuronal death. NOS3 phosphorylation down regulates NOS3-derived nitrite (NO) levels. SRC phosphorylation mediates its ubiquitin-dependent degradation and thus leads to cytoskeletal reorganization. May regulate endothelial cell migration and angiogenesis via the modulation of lamellipodia formation. Involved in dendritic spine morphogenesis by mediating the EFNA1-EPHA4 signaling. The complex p35/CDK5 participates in the regulation of the circadian clock by modulating the function of CLOCK protein: phosphorylates CLOCK at 'Thr-451' and 'Thr-461' and regulates the transcriptional activity of the CLOCK-BMAL1 heterodimer in association with altered stability and subcellular distribution. This Homo sapiens (Human) protein is Cyclin-dependent kinase 5.